We begin with the raw amino-acid sequence, 385 residues long: tRNA-specific 2-thiouridylase MnmA (385 aa).

Residues 27-34 (AMSGGVDS) and Leu-53 contribute to the ATP site. Cys-121 acts as the Nucleophile in catalysis. Cysteines 121 and 217 form a disulfide. Residue Gly-145 coordinates ATP. Positions 167–169 (KDQ) are interaction with tRNA. Residue Cys-217 is the Cysteine persulfide intermediate of the active site.

This sequence belongs to the MnmA/TRMU family.

The protein resides in the cytoplasm. It carries out the reaction S-sulfanyl-L-cysteinyl-[protein] + uridine(34) in tRNA + AH2 + ATP = 2-thiouridine(34) in tRNA + L-cysteinyl-[protein] + A + AMP + diphosphate + H(+). In terms of biological role, catalyzes the 2-thiolation of uridine at the wobble position (U34) of tRNA, leading to the formation of s(2)U34. The chain is tRNA-specific 2-thiouridylase MnmA from Sorangium cellulosum (strain So ce56) (Polyangium cellulosum (strain So ce56)).